The following is a 418-amino-acid chain: Putative competence-damage inducible protein (418 aa).

It belongs to the CinA family.

This chain is Putative competence-damage inducible protein, found in Streptococcus pneumoniae serotype 19F (strain G54).